Consider the following 271-residue polypeptide: Formamidopyrimidine-DNA glycosylase (271 aa).

Residue Pro2 is the Schiff-base intermediate with DNA of the active site. Residue Glu3 is the Proton donor of the active site. The Proton donor; for beta-elimination activity role is filled by Lys57. Residues His90, Arg109, and Lys151 each coordinate DNA. An FPG-type zinc finger spans residues 236 to 270 (HVYGRGGETCTQCGNLLSEIRLGQRTTVFCGICQT). Arg260 serves as the catalytic Proton donor; for delta-elimination activity.

The protein belongs to the FPG family. In terms of assembly, monomer. Zn(2+) is required as a cofactor.

It catalyses the reaction Hydrolysis of DNA containing ring-opened 7-methylguanine residues, releasing 2,6-diamino-4-hydroxy-5-(N-methyl)formamidopyrimidine.. It carries out the reaction 2'-deoxyribonucleotide-(2'-deoxyribose 5'-phosphate)-2'-deoxyribonucleotide-DNA = a 3'-end 2'-deoxyribonucleotide-(2,3-dehydro-2,3-deoxyribose 5'-phosphate)-DNA + a 5'-end 5'-phospho-2'-deoxyribonucleoside-DNA + H(+). Its function is as follows. Involved in base excision repair of DNA damaged by oxidation or by mutagenic agents. Acts as a DNA glycosylase that recognizes and removes damaged bases. Has a preference for oxidized purines, such as 7,8-dihydro-8-oxoguanine (8-oxoG). Has AP (apurinic/apyrimidinic) lyase activity and introduces nicks in the DNA strand. Cleaves the DNA backbone by beta-delta elimination to generate a single-strand break at the site of the removed base with both 3'- and 5'-phosphates. The chain is Formamidopyrimidine-DNA glycosylase from Shewanella sp. (strain MR-7).